The primary structure comprises 347 residues: Protein RecA (347 aa).

Residue 68–75 (GPESSGKT) participates in ATP binding.

This sequence belongs to the RecA family.

It localises to the cytoplasm. In terms of biological role, can catalyze the hydrolysis of ATP in the presence of single-stranded DNA, the ATP-dependent uptake of single-stranded DNA by duplex DNA, and the ATP-dependent hybridization of homologous single-stranded DNAs. It interacts with LexA causing its activation and leading to its autocatalytic cleavage. The polypeptide is Protein RecA (Mycobacterium sp. (strain JLS)).